Here is a 422-residue protein sequence, read N- to C-terminus: GTPase Obg (422 aa).

Positions 1–156 (MKFIDEVNVL…FALRLVLKVL (156 aa)) constitute an Obg domain. Residues 157–324 (ADVGLVGKPS…LKAAIFKMLE (168 aa)) enclose the OBG-type G domain. Residues 163–170 (GKPSAGKS), 188–192 (FTTLV), 209–212 (DLPG), 278–281 (NKSD), and 305–307 (SAL) each bind GTP. Mg(2+) is bound by residues serine 170 and threonine 190. One can recognise an OCT domain in the interval 342–420 (NITLDRDALK…IGNFEFDWSD (79 aa)).

Belongs to the TRAFAC class OBG-HflX-like GTPase superfamily. OBG GTPase family. Monomer. Mg(2+) serves as cofactor.

Its subcellular location is the cytoplasm. In terms of biological role, an essential GTPase which binds GTP, GDP and possibly (p)ppGpp with moderate affinity, with high nucleotide exchange rates and a fairly low GTP hydrolysis rate. Plays a role in control of the cell cycle, stress response, ribosome biogenesis and in those bacteria that undergo differentiation, in morphogenesis control. This is GTPase Obg from Metamycoplasma arthritidis (strain 158L3-1) (Mycoplasma arthritidis).